Reading from the N-terminus, the 366-residue chain is MPDPRDLQLSSYDYPLPQERIAQVPAEPRHSARMLMVPPATQALEAARHGVVWDLLEELQPGDLLVVNNTRVLKARLKVRRSGGGLSELLVLEPRGEGRWLCLARPAKRMRPGDVLTIDGTSIGLTVLEDDAASGGRLVQFPTDCRDAETIETLLNQWGEVPLPPYIDRHDPDDVERYQTRYADRPGAVAAPTAGLHFSDELLAGLQLKGVELARITLHVGLGTFRPVETNDLTRLELHSEWVEVSAAVVEAIQRCRGRVIAVGTTSVRALEGAAQQNGGVLQPFTGPVNLVIQPGYRFAVVQGLMTNFHLPKSSLLLLVSALIGREKLLAIYTEAIERNYRFFSYGDAMWIAPEAVLSQAEPVGH.

It belongs to the QueA family. In terms of assembly, monomer.

It localises to the cytoplasm. The catalysed reaction is 7-aminomethyl-7-carbaguanosine(34) in tRNA + S-adenosyl-L-methionine = epoxyqueuosine(34) in tRNA + adenine + L-methionine + 2 H(+). Its pathway is tRNA modification; tRNA-queuosine biosynthesis. Functionally, transfers and isomerizes the ribose moiety from AdoMet to the 7-aminomethyl group of 7-deazaguanine (preQ1-tRNA) to give epoxyqueuosine (oQ-tRNA). This chain is S-adenosylmethionine:tRNA ribosyltransferase-isomerase, found in Parasynechococcus marenigrum (strain WH8102).